Reading from the N-terminus, the 522-residue chain is MLSTQWNANKQISRQIYQLCRGLAQKATAVNLEEAKPYADIPGPSKLQLIRAFLPGGLYKNLPVHEMFLDMNRQYGSIFRMPSVAGTDLVLTMNPQDYEVIFRNEGQYPYRRSFEVMDYFKRVHRREVFDGYDGLTSGNGPAWGKMRTAVNPILLQPRNAKLYMTNLVQVSDEFLERIRIIRDPVTQEMPDDFAVDIRHLVIESICSVALNTHLGLLGEQRNNKDIQKLVLALQDVVELGFQLDIMPAFWKYLPMPNFKKLMRSLDTITDFCYFHIGNALKRIEEDAKAGTLNEIGLETSLLEKLARFDRQTAVIIAMDLLFAGADPTLVTLGGILFSLSKSPDKQARLLEEIRGILPNKDSSLTIENMRNLPYLRACIKEGIRMYPIGPGTLRRMPHDVVLSGYRVVAGTDVGIAANYQMANMEQFVPKVREFIPERWLRDESNSHLVGETATPFMYLPFGFGPRSCAGKRIVDMMLEIAISRLVRNFKIGFDYPIENAFKAQFFVQPNIPFKFKFIERNE.

Cys-468 provides a ligand contact to heme.

The protein belongs to the cytochrome P450 family. Requires heme as cofactor.

The protein localises to the mitochondrion membrane. The polypeptide is Probable cytochrome P450 12e1, mitochondrial (Cyp12e1) (Drosophila melanogaster (Fruit fly)).